The chain runs to 228 residues: Ephrin-A5 (228 aa).

The N-terminal stretch at 1–20 is a signal peptide; it reads MLHVEMLTLVFLVLWMCVFS. Positions 29-162 constitute an Ephrin RBD domain; sequence ADRYAVYWNS…KLKVFVRPTN (134 aa). Asn37 is a glycosylation site (N-linked (GlcNAc...) asparagine). 2 cysteine pairs are disulfide-bonded: Cys62-Cys102 and Cys90-Cys151. The tract at residues 186-205 is disordered; that stretch reads EPADDTVHESAEPSRGENAA. Positions 190 to 200 are enriched in basic and acidic residues; the sequence is DTVHESAEPSR. Asn203 carries the GPI-anchor amidated asparagine lipid modification. Positions 204–228 are cleaved as a propeptide — removed in mature form; the sequence is AAQTPRIPSRLLAILLFLLAMLLTL.

It belongs to the ephrin family. In terms of assembly, binds to EPHB2. Interacts with EPHA8; activates EPHA8. Binds to the receptor tyrosine kinases EPHA2, EPHA3 and EPHB1. Forms a ternary EFNA5-EPHA3-ADAM10 complex mediating EFNA5 extracellular domain shedding by ADAM10 which regulates the EFNA5-EPHA3 complex internalization and function.

Its subcellular location is the cell membrane. It localises to the membrane. It is found in the caveola. Functionally, cell surface GPI-bound ligand for Eph receptors, a family of receptor tyrosine kinases which are crucial for migration, repulsion and adhesion during neuronal, vascular and epithelial development. Binds promiscuously Eph receptors residing on adjacent cells, leading to contact-dependent bidirectional signaling into neighboring cells. The signaling pathway downstream of the receptor is referred to as forward signaling while the signaling pathway downstream of the ephrin ligand is referred to as reverse signaling. Induces compartmentalized signaling within a caveolae-like membrane microdomain when bound to the extracellular domain of its cognate receptor. This signaling event requires the activity of the Fyn tyrosine kinase. Activates the EPHA3 receptor to regulate cell-cell adhesion and cytoskeletal organization. With the receptor EPHA2 may regulate lens fiber cells shape and interactions and be important for lens transparency maintenance. May function actively to stimulate axon fasciculation. The interaction of EFNA5 with EPHA5 also mediates communication between pancreatic islet cells to regulate glucose-stimulated insulin secretion. Cognate/functional ligand for EPHA7, their interaction regulates brain development modulating cell-cell adhesion and repulsion. This Homo sapiens (Human) protein is Ephrin-A5 (EFNA5).